The primary structure comprises 606 residues: DNA ligase (606 aa).

Glu-263 is an ATP binding site. The N6-AMP-lysine intermediate role is filled by Lys-265. Positions 270, 285, 315, 355, 432, and 438 each coordinate ATP.

Belongs to the ATP-dependent DNA ligase family. Mg(2+) is required as a cofactor. It depends on Mn(2+) as a cofactor.

It catalyses the reaction ATP + (deoxyribonucleotide)n-3'-hydroxyl + 5'-phospho-(deoxyribonucleotide)m = (deoxyribonucleotide)n+m + AMP + diphosphate.. The enzyme catalyses ADP + (deoxyribonucleotide)n-3'-hydroxyl + 5'-phospho-(deoxyribonucleotide)m = (deoxyribonucleotide)n+m + AMP + phosphate.. It carries out the reaction GTP + (deoxyribonucleotide)n-3'-hydroxyl + 5'-phospho-(deoxyribonucleotide)m = (deoxyribonucleotide)n+m + GMP + diphosphate.. In terms of biological role, DNA ligase that seals nicks in double-stranded DNA during DNA replication, DNA recombination and DNA repair. Can use ATP, ADP and GTP, but not CTP, TTP or NAD(+). This is DNA ligase from Sulfophobococcus zilligii.